We begin with the raw amino-acid sequence, 1263 residues long: Topoisomerase 1-associated factor 1 (1263 aa).

Disordered stretches follow at residues 1042–1098 and 1178–1263; these read ERQL…DDSQ and VEES…DEEE. The span at 1060 to 1071 shows a compositional bias: basic residues; sequence TKGKARKKSKEK. The span at 1179–1189 shows a compositional bias: acidic residues; the sequence is EESDNDDEVEE. Polar residues predominate over residues 1211–1226; that stretch reads VDTQQDLSDNTSNTSD.

The protein belongs to the timeless family. In terms of assembly, component of the fork protection complex (FPC) consisting of TOF1 and CSM3.

Its subcellular location is the nucleus. Its function is as follows. Forms a fork protection complex (FPC) with CSM3 and which is required for chromosome segregation during meiosis and DNA damage repair. FPC coordinates leading and lagging strand synthesis and moves with the replication fork. FPC stabilizes replication forks in a configuration that is recognized by replication checkpoint sensors. The chain is Topoisomerase 1-associated factor 1 (YBL053) from Candida albicans (strain SC5314 / ATCC MYA-2876) (Yeast).